Here is a 161-residue protein sequence, read N- to C-terminus: Ribosome maturation factor RimP (161 aa).

It belongs to the RimP family.

The protein resides in the cytoplasm. Required for maturation of 30S ribosomal subunits. This is Ribosome maturation factor RimP from Rickettsia rickettsii (strain Iowa).